A 182-amino-acid chain; its full sequence is Plasmolipin (182 aa).

Positions 1–20 are disordered; that stretch reads MAEFPSKVNTRTSSPAQGGG. At 1–35 the chain is on the cytoplasmic side; the sequence is MAEFPSKVNTRTSSPAQGGGAVVSTLSPDLGFVRS. The segment covering 7 to 16 has biased composition (polar residues); that stretch reads KVNTRTSSPA. Residues 32 to 166 enclose the MARVEL domain; it reads FVRSSLGALM…SAFLSFQAWR (135 aa). Residues 36 to 56 form a helical membrane-spanning segment; the sequence is SLGALMLLQLVLGLLVWALIA. At 57–68 the chain is on the extracellular side; sequence DTPYHLYPSYGW. The chain crosses the membrane as a helical span at residues 69-89; it reads VMFVAVFLWLVTIIFFVLYLF. Topologically, residues 90–99 are cytoplasmic; it reads QLHMKLYMVP. A helical transmembrane segment spans residues 100 to 120; it reads WPLVLMVFNVGATVLYITAFI. The Extracellular portion of the chain corresponds to 121 to 141; the sequence is TCSASVELTSLKGSQPYNQRA. Residues 142 to 162 form a helical membrane-spanning segment; the sequence is AASFFSCLVMIAYGVSAFLSF. The Cytoplasmic segment spans residues 163–182; that stretch reads QAWRGVGSNAATSQMAGGYA.

Belongs to the MAL family. In terms of assembly, forms oligomers. Phosphorylated.

It localises to the cell membrane. The protein resides in the myelin membrane. It is found in the apical cell membrane. In terms of biological role, main component of the myelin sheath that plays an important role in myelin membrane biogenesis and myelination. Plays an essential function in apical endocytosis. Regulates epithelial development through the regulation of apical endocytosis. Part of the intracellular machinery that mediates basolateral-to-apical transport of ICAM-1, an essential adhesion receptor in epithelial cells, from the subapical compartment in hepatic epithelial cells. This is Plasmolipin (PLLP) from Bos taurus (Bovine).